Reading from the N-terminus, the 453-residue chain is MKLKTTLFGNVYQFKDVKEVLAKANELRSGDVLAGVAAASSQERVAAKQVLSEMTVADIRNNPVIAYEDDCVTRLIQDDVNETAYNQIKNWSISELREYVLSDETSVDDIAFTRKGLTSEVVAAVAKICSNADLIYGAKKMPVIKKANTTIGIPGTFSARLQPNDTRDDVQSIAAQIYEGLSFGVGDAVIGVNPVTDDVENLSRVLDTIYGVIDKFNIPTQGCVLAHVTTQIEAIRRGAPGGLIFQSICGSEKGLKEFGVELAMLDEARAVGAEFNRIAGENCLYFETGQGSALSAGANFGADQVTMEARNYGLARHYDPFIVNTVVGFIGPEYLYNDRQIIRAGLEDHFMGKLSGISMGCDCCYTNHADADQNLNENLMILLATAGCNYIMGMPLGDDIMLNYQTTAFHDTATVRQLLNLRPSPEFERWLESMGIMANGRLTKRAGDPSLFF.

Residues 160–162 (RLQ) and asparagine 193 each bind substrate. 2 residues coordinate adenosylcob(III)alamin: proline 194 and glutamine 246. Residue glutamate 287 participates in substrate binding. Serine 295 serves as a coordination point for adenosylcob(III)alamin. Aspartate 362 is a binding site for substrate. Methionine 401 contacts adenosylcob(III)alamin.

The protein belongs to the EutB family. As to quaternary structure, the basic unit is a heterodimer which dimerizes to form tetramers. The heterotetramers trimerize; 6 large subunits form a core ring with 6 small subunits projecting outwards. Requires adenosylcob(III)alamin as cofactor.

The protein localises to the bacterial microcompartment. It carries out the reaction ethanolamine = acetaldehyde + NH4(+). The protein operates within amine and polyamine degradation; ethanolamine degradation. In terms of biological role, catalyzes the deamination of various vicinal amino-alcohols to oxo compounds. Allows this organism to utilize ethanolamine as the sole source of nitrogen and carbon in the presence of vitamin B12. The polypeptide is Ethanolamine ammonia-lyase large subunit (Escherichia coli O157:H7).